Here is a 236-residue protein sequence, read N- to C-terminus: Small ribosomal subunit protein uS2c (236 aa).

This sequence belongs to the universal ribosomal protein uS2 family.

It is found in the plastid. The protein localises to the chloroplast. The chain is Small ribosomal subunit protein uS2c (rps2) from Morus indica (Mulberry).